The chain runs to 954 residues: E3 ubiquitin-protein ligase arkadia (954 aa).

A compositionally biased stretch (polar residues) spans 50–66; it reads LCSDTNKQQRDLNSNGT. Disordered stretches follow at residues 50–175 and 193–276; these read LCSD…VSSL and RKRF…SGGM. 2 stretches are compositionally biased toward low complexity: residues 112 to 131 and 232 to 251; these read SSFS…GDSD and SSSS…SSST. The SUMO interaction motif 1 (SIM) signature appears at 280-284; that stretch reads VVVIE. The short motif at 305 to 311 is the SUMO interaction motif 2 (SIM) element; it reads EVEIVTV. Disordered stretches follow at residues 318-346, 364-452, and 485-509; these read RTTL…RNRV, TVDE…MPRL, and HFPH…SFRD. Residues 328–337 are compositionally biased toward polar residues; it reads WGQNTQSGRT. The SUMO interaction motif 3 (SIM) motif lies at 360 to 364; sequence VVDLT. The span at 385-395 shows a compositional bias: low complexity; sequence VSTVSSNTSTS. The span at 485–496 shows a compositional bias: basic residues; that stretch reads HFPHHHHHHHQS. The interval 867–869 is ubiquitin binding; sequence YPH. 2 residues coordinate Zn(2+): Cys902 and Cys905. An RING-type; atypical zinc finger spans residues 902-943; sequence CTICLSILEEGEDVRRLPCMHLFHQVCVDQWLITNKKCPICR. The ubiquitin binding stretch occupies residues 917 to 921; the sequence is RLPCM. Residues His925 and Cys928 each contribute to the Zn(2+) site.

It belongs to the Arkadia family. In terms of assembly, monomer.

The protein localises to the nucleus. Its subcellular location is the cytoplasm. The protein resides in the PML body. The catalysed reaction is S-ubiquitinyl-[E2 ubiquitin-conjugating enzyme]-L-cysteine + [acceptor protein]-L-lysine = [E2 ubiquitin-conjugating enzyme]-L-cysteine + N(6)-ubiquitinyl-[acceptor protein]-L-lysine.. It functions in the pathway protein modification; protein ubiquitination. Binds free ubiquitin non-covalently via its RING-type zinc finger. Ubiquitin-binding leads to enhance the E3 ubiquitin-protein ligase activity by stabilizing the ubiquitin-conjugating enzyme E2 (donor ubiquitin) in the 'closed' conformation and activating ubiquitin transfer. E3 ubiquitin-protein ligase required for mesoderm patterning during embryonic development. Acts as an enhancer of the transcriptional responses of the smad2/smad3 effectors, which are activated downstream of BMP. Acts by mediating ubiquitination and degradation of SMAD inhibitors such as smad7, inducing their proteasomal degradation and thereby enhancing the transcriptional activity of TGF-beta and BMP. Specifically binds polysumoylated chains via SUMO interaction motifs (SIMs) and mediates ubiquitination of sumoylated substrates. The regulation of the BMP-SMAD signaling is however independent of sumoylation and is not dependent of SUMO interaction motifs (SIMs). In Xenopus tropicalis (Western clawed frog), this protein is E3 ubiquitin-protein ligase arkadia (rnf111).